Here is a 464-residue protein sequence, read N- to C-terminus: Arylsulfatase (464 aa).

The first 20 residues, 1 to 20, serve as a signal peptide directing secretion; that stretch reads MNKKAMAAAVSMILAGGAHA. Residues D34, D35, and S72 each contribute to the Ca(2+) site. The active-site Nucleophile is S72. 3-oxoalanine (Ser) is present on S72. Residue H134 is part of the active site. Ca(2+) is bound by residues D329 and N330.

Belongs to the sulfatase family. Requires Ca(2+) as cofactor. In terms of processing, the conversion to 3-oxoalanine (also known as C-formylglycine, FGly), of a serine or cysteine residue in prokaryotes and of a cysteine residue in eukaryotes, is critical for catalytic activity.

It localises to the periplasm. It carries out the reaction an aryl sulfate + H2O = a phenol + sulfate + H(+). Plays an important role in the mineralization of sulfates. This is Arylsulfatase (atsA) from Klebsiella aerogenes (Enterobacter aerogenes).